We begin with the raw amino-acid sequence, 555 residues long: Bifunctional epoxide hydrolase 2 (555 aa).

The interval 1 to 224 (MTLRAAVFDL…KVTGIQLLNT (224 aa)) is phosphatase. Positions 9 and 11 each coordinate Mg(2+). Lys43 bears the N6-acetyllysine mark. The residue at position 55 (Lys55) is an N6-succinyllysine. 123–124 (TN) lines the phosphate pocket. Asp185 provides a ligand contact to Mg(2+). 2 positions are modified to N6-acetyllysine: Lys191 and Lys215. Residues 235–555 (SDMSHGYVTV…ARNPPVVSKM (321 aa)) form an epoxide hydrolase region. Residues 259 to 531 (PAVCLCHGFP…CGHWTQMDKP (273 aa)) enclose the AB hydrolase-1 domain. The active-site Nucleophile is the Asp335. A Phosphoserine modification is found at Ser370. Tyr383 lines the substrate pocket. Residues Lys421 and Lys455 each carry the N6-succinyllysine modification. Tyr466 acts as the Proton donor in catalysis. A lipid anchor (S-(15-deoxy-Delta12,14-prostaglandin J2-9-yl)cysteine) is attached at Cys522. The active-site Proton acceptor is His524. A Microbody targeting signal motif is present at residues 553-555 (SKM). Lys554 is modified (N6-succinyllysine).

It belongs to the AB hydrolase superfamily. Epoxide hydrolase family. Homodimer. The cofactor is Mg(2+). The N-terminus is blocked. Post-translationally, the covalent modification of cysteine by 15-deoxy-Delta12,14-prostaglandin-J2 is autocatalytic and reversible. It may occur as an alternative to other cysteine modifications, such as S-nitrosylation and S-palmitoylation.

It is found in the cytoplasm. Its subcellular location is the peroxisome. The enzyme catalyses an epoxide + H2O = an ethanediol. It catalyses the reaction (9S,10S)-10-hydroxy-9-(phosphooxy)octadecanoate + H2O = (9S,10S)-9,10-dihydroxyoctadecanoate + phosphate. The catalysed reaction is 12-phosphooxy-(9Z)-octadecenoate + H2O = 12-hydroxy-(9Z)-octadecenoate + phosphate. It carries out the reaction 12-phosphooxy-(9E)-octadecenoate + H2O = 12-hydroxy-(9E)-octadecenoate + phosphate. The enzyme catalyses 12-(phosphooxy)octadecanoate + H2O = 12-hydroxyoctadecanoate + phosphate. It catalyses the reaction 8,9-epoxy-(5Z,11Z,14Z)-eicosatrienoate + H2O = 8,9-dihydroxy-(5Z,11Z,14Z)-eicosatrienoate. The catalysed reaction is 11,12-epoxy-(5Z,8Z,14Z)-eicosatrienoate + H2O = 11,12-dihydroxy-(5Z,8Z,14Z)-eicosatrienoate. It carries out the reaction 14,15-epoxy-(5Z,8Z,11Z)-eicosatrienoate + H2O = 14,15-dihydroxy-(5Z,8Z,11Z)-eicosatrienoate. The enzyme catalyses 9,10-epoxy-(12Z)-octadecenoate + H2O = 9,10-dihydroxy-(12Z)-octadecenoate. It catalyses the reaction 8-hydroxy-(11S,12S)-epoxy-(5Z,9E,14Z)-eicosatrienoate + H2O = (8,11R,12S)-trihydroxy-(5Z,9E,14Z)-eicosatrienoate. The catalysed reaction is 10-hydroxy-(11S,12S)-epoxy- (5Z,8Z,14Z)-eicosatrienoate + H2O = (10,11S,12R)-trihydroxy-(5Z,8Z,14Z)-eicosatrienoate. It carries out the reaction 1-tetradecanoyl-sn-glycerol 3-phosphate + H2O = 1-tetradecanoyl-sn-glycerol + phosphate. The enzyme catalyses 1-octadecanoyl-sn-glycero-3-phosphate + H2O = 1-octadecanoyl-sn-glycerol + phosphate. It catalyses the reaction 1-(5Z,8Z,11Z,14Z-eicosatetraenoyl)-sn-glycero-3-phosphate + H2O = 1-(5Z,8Z,11Z,14Z-eicosatetraenoyl)-sn-glycerol + phosphate. The catalysed reaction is 1-hexadecanoyl-sn-glycero-3-phosphate + H2O = 1-hexadecanoyl-sn-glycerol + phosphate. It carries out the reaction 1-(9Z-octadecenoyl)-sn-glycero-3-phosphate + H2O = 1-(9Z-octadecenoyl)-sn-glycerol + phosphate. The enzyme catalyses (8S,9R)-epoxy-(5Z,11Z,14Z)-eicosatrienoate + H2O = (8S,9S)-dihydroxy-(5Z,11Z,14Z)-eicosatrienoate. It catalyses the reaction (11S,12R)-epoxy-(5Z,8Z,14Z)-eicosatrienoate + H2O = (11R,12R)-dihydroxy-(5Z,8Z,14Z)-eicosatrienoate. The catalysed reaction is (11S,12R)-epoxy-(5Z,8Z,14Z)-eicosatrienoate + H2O = (11S,12S)-dihydroxy-(5Z,8Z,14Z)-eicosatrienoate. It carries out the reaction (14S,15R)-epoxy-(5Z,8Z,11Z)-eicosatrienoate + H2O = (14R,15R)-dihydroxy-(5Z,8Z,11Z)-eicosatrienoate. The enzyme catalyses (14S,15R)-epoxy-(5Z,8Z,11Z)-eicosatrienoate + H2O = (14S,15S)-dihydroxy-(5Z,8Z,11Z)-eicosatrienoate. It catalyses the reaction (11R,12S)-epoxy-(5Z,8Z,14Z)-eicosatrienoate + H2O = (11S,12S)-dihydroxy-(5Z,8Z,14Z)-eicosatrienoate. The catalysed reaction is (11R,12S)-epoxy-(5Z,8Z,14Z)-eicosatrienoate + H2O = (11R,12R)-dihydroxy-(5Z,8Z,14Z)-eicosatrienoate. It carries out the reaction (8S,9R)-epoxy-(5Z,11Z,14Z)-eicosatrienoate + H2O = (8R,9R)-dihydroxy-(5Z,11Z,14Z)-eicosatrienoate. The enzyme catalyses (14R,15S)-epoxy-(5Z,8Z,11Z)-eicosatrienoate + H2O = (14R,15R)-dihydroxy-(5Z,8Z,11Z)-eicosatrienoate. With respect to regulation, inhibited by 1-(1-acetylpiperidin-4-yl)-3-(4-(trifl uoromethoxy)phenyl)urea (TPAU), 1-cyclohexyl-3-dodecylurea (CDU), 12-(3-adamantan-1-yl-ureido)-dodecanoic acid (AUDA), 1-((3S, 5S, 7S)-adamantan-1-yl)-3-(5-(2-(2-ethoxyethoxy) ethoxy)pentyl)urea (AEPU), N-adamantyl-N[']-cyclohexyl urea (ACU), 4-(((1S, 4S)-4-(3-((3S, 5S, 7S)-adamantan-1-yl) ureido)cyclohexyl)oxy)benzoic acid (c-AUCB), 4-(((1R, 4R)-4-(3-((3S, 5S, 7S)-adamantan-1-yl)ureido)cyclohexyl)oxy)benzoic acid (t-AUCB), 4-(((1R, 4R)-4-(3-(4(trifluoromethoxy)phenyl)ureido)cyclohexyl)oxy)benzoic acid (t-TAUCB) and to a lesser extent by 8-(3-((3S, 5S, 7S)-adamantan-1-yl)ureido) octanoic acid (AUOA). Phosphatase activity is inhibited by dodecyl-phosphate, phospholipids such as phospho-lysophosphatidic acids and fatty acids such as palmitic acid and lauric acid. Its function is as follows. Bifunctional enzyme. The C-terminal domain has epoxide hydrolase activity and acts on epoxides (alkene oxides, oxiranes) and arene oxides. Plays a role in xenobiotic metabolism by degrading potentially toxic epoxides. Also determines steady-state levels of physiological mediators. Bifunctional enzyme. The N-terminal domain has lipid phosphatase activity, with the highest activity towards threo-9,10-phosphonooxy-hydroxy-octadecanoic acid, followed by erythro-9,10-phosphonooxy-hydroxy-octadecanoic acid, 12-phosphonooxy-octadec-9Z-enoic acid and 12-phosphonooxy-octadec-9E-enoic acid. Has phosphatase activity toward lyso-glycerophospholipids with also some lower activity toward lysolipids of sphingolipid and isoprenoid phosphates. This chain is Bifunctional epoxide hydrolase 2, found in Homo sapiens (Human).